The chain runs to 243 residues: Orotidine 5'-phosphate decarboxylase (243 aa).

Substrate-binding positions include aspartate 19, lysine 41, 69-78 (DLKFFDIPAT), threonine 124, arginine 185, glutamine 194, glycine 214, and arginine 215. Lysine 71 serves as the catalytic Proton donor.

Belongs to the OMP decarboxylase family. Type 1 subfamily. Homodimer.

The catalysed reaction is orotidine 5'-phosphate + H(+) = UMP + CO2. It participates in pyrimidine metabolism; UMP biosynthesis via de novo pathway; UMP from orotate: step 2/2. Functionally, catalyzes the decarboxylation of orotidine 5'-monophosphate (OMP) to uridine 5'-monophosphate (UMP). This chain is Orotidine 5'-phosphate decarboxylase, found in Xanthomonas oryzae pv. oryzae (strain MAFF 311018).